Consider the following 320-residue polypeptide: Cytochrome f (320 aa).

The first 35 residues, 1-35 (MQTRNTFSWIKEEITRSISVSLMIYIITGASISNA), serve as a signal peptide directing secretion. Heme is bound by residues tyrosine 36, cysteine 56, cysteine 59, and histidine 60. Residues 286 to 306 (VQGLLFFLASIVFAQIFLVLK) traverse the membrane as a helical segment.

Belongs to the cytochrome f family. The 4 large subunits of the cytochrome b6-f complex are cytochrome b6, subunit IV (17 kDa polypeptide, petD), cytochrome f and the Rieske protein, while the 4 small subunits are PetG, PetL, PetM and PetN. The complex functions as a dimer. Heme serves as cofactor.

It is found in the plastid. The protein resides in the chloroplast thylakoid membrane. Component of the cytochrome b6-f complex, which mediates electron transfer between photosystem II (PSII) and photosystem I (PSI), cyclic electron flow around PSI, and state transitions. The chain is Cytochrome f from Gossypium barbadense (Sea Island cotton).